Consider the following 150-residue polypeptide: Snaclec bothrojaracin subunit beta (150 aa).

An N-terminal signal peptide occupies residues 1 to 23; it reads MGRFIFVSFGLLVVFLSLSGTAA. Cystine bridges form between cysteine 25–cysteine 36, cysteine 53–cysteine 146, and cysteine 123–cysteine 138. A C-type lectin domain is found at 32–147; that stretch reads YEGSCYRVFE…CTKLEYFVCE (116 aa).

Belongs to the snaclec family. In terms of assembly, heterodimer of subunits alpha and beta; disulfide-linked. Expressed by the venom gland.

It localises to the secreted. In terms of biological role, this potent antithrombotic agent acts in a calcium-independent manner. Exerts its anticoagulant effect by two distinct mechanisms. It binds to activated thrombin through exosite 1, blocking fibrinogen clotting, platelet activation, factor V activation and other effects, and it interacts with prothrombin (F2), decreasing its proteolytic activation -especially in the presence of factor Va. In vivo, intravenous injection before thrombosis induction causes a significant decrease in thrombus weight. Furthermore, BJC shows a prolonged effect by remaining in the plasma bound to prothrombin for at least 12 hours. This is Snaclec bothrojaracin subunit beta from Bothrops jararaca (Jararaca).